Consider the following 494-residue polypeptide: Glutamate decarboxylase 5 (494 aa).

The residue at position 276 (K276) is an N6-(pyridoxal phosphate)lysine.

Belongs to the group II decarboxylase family. As to quaternary structure, homohexamer. Interacts with calmodulin. It depends on pyridoxal 5'-phosphate as a cofactor. In terms of tissue distribution, expressed in flowers.

The catalysed reaction is L-glutamate + H(+) = 4-aminobutanoate + CO2. Catalyzes the production of GABA. The calmodulin-binding is calcium-dependent and it is proposed that this may, directly or indirectly, form a calcium regulated control of GABA biosynthesis. The chain is Glutamate decarboxylase 5 (GAD5) from Arabidopsis thaliana (Mouse-ear cress).